The chain runs to 62 residues: Large ribosomal subunit protein uL29 (62 aa).

It belongs to the universal ribosomal protein uL29 family.

The protein is Large ribosomal subunit protein uL29 of Vesicomyosocius okutanii subsp. Calyptogena okutanii (strain HA).